The primary structure comprises 290 residues: ATP synthase gamma chain (290 aa).

It belongs to the ATPase gamma chain family. F-type ATPases have 2 components, CF(1) - the catalytic core - and CF(0) - the membrane proton channel. CF(1) has five subunits: alpha(3), beta(3), gamma(1), delta(1), epsilon(1). CF(0) has three main subunits: a, b and c.

Its subcellular location is the cell membrane. In terms of biological role, produces ATP from ADP in the presence of a proton gradient across the membrane. The gamma chain is believed to be important in regulating ATPase activity and the flow of protons through the CF(0) complex. The polypeptide is ATP synthase gamma chain (Buchnera aphidicola subsp. Diuraphis noxia).